Consider the following 124-residue polypeptide: Fluoride-specific ion channel FluC (124 aa).

A run of 3 helical transmembrane segments spans residues 5-27 (LFVALGGSIGAVFRYLLSIFMLQ), 70-90 (VGLLGALTTFSTFSNETLLLI), and 95-115 (WIKAFFNIALNLCLCIFMVYL). Residues glycine 74 and threonine 77 each coordinate Na(+).

This sequence belongs to the fluoride channel Fluc/FEX (TC 1.A.43) family.

It is found in the cell inner membrane. The enzyme catalyses fluoride(in) = fluoride(out). Its activity is regulated as follows. Na(+) is not transported, but it plays an essential structural role and its presence is essential for fluoride channel function. In terms of biological role, fluoride-specific ion channel. Important for reducing fluoride concentration in the cell, thus reducing its toxicity. The protein is Fluoride-specific ion channel FluC of Shewanella sediminis (strain HAW-EB3).